A 319-amino-acid chain; its full sequence is Probable cystathionine gamma-synthase (319 aa).

Lys-197 is modified (N6-(pyridoxal phosphate)lysine).

Belongs to the trans-sulfuration enzymes family. Homotetramer. The cofactor is pyridoxal 5'-phosphate.

The protein localises to the cytoplasm. The enzyme catalyses O-succinyl-L-homoserine + L-cysteine = L,L-cystathionine + succinate + H(+). Its function is as follows. Catalyzes the formation of L-cystathionine from O-succinyl-L-homoserine (OSHS) and L-cysteine, via a gamma-replacement reaction. In the absence of thiol, catalyzes gamma-elimination to form 2-oxobutanoate, succinate and ammonia. This is Probable cystathionine gamma-synthase (metB) from Herpetosiphon aurantiacus (Herpetosiphon giganteus).